The sequence spans 905 residues: V-type proton ATPase 116 kDa subunit a 1 (905 aa).

Topologically, residues M1–E424 are cytoplasmic. The helical transmembrane segment at I425–F443 threads the bilayer. Residues G444–D445 are Lumenal-facing. Residues M446–K462 traverse the membrane as a helical segment. Over E463–Q477 the chain is Cytoplasmic. A helical membrane pass occupies residues T478–S507. The Lumenal segment spans residues I508–S572. The helical transmembrane segment at M573 to L592 threads the bilayer. Residues S593–F610 lie on the Cytoplasmic side of the membrane. A helical transmembrane segment spans residues I611–K631. The Lumenal segment spans residues W632–I699. Residues L700–L719 traverse the membrane as a helical segment. Residues Y720 to T788 lie on the Cytoplasmic side of the membrane. Residues I789 to A813 form a helical membrane-spanning segment. The Lumenal portion of the chain corresponds to Q814–T834. A helical transmembrane segment spans residues G835–E873. Residues F874–L905 are Cytoplasmic-facing.

Belongs to the V-ATPase 116 kDa subunit family. As to quaternary structure, V-ATPase is a heteromultimeric enzyme made up of two complexes: the ATP-hydrolytic V1 complex and the proton translocation V0 complex. The V1 complex consists of three catalytic AB heterodimers that form a heterohexamer, three peripheral stalks each consisting of EG heterodimers, one central rotor including subunits D and F, and the regulatory subunits C and H. The proton translocation complex V0 consists of the proton transport subunit a, a ring of proteolipid subunits c9c'', rotary subunit d, subunits e and f, and the accessory subunits vah-19/Ac45 and vah-20/PRR. Interacts with V-type proton ATPase subunit C vha-11. As to expression, ubiquitous expression in embryos. Expressed in gonads, intestine, neurons in the head and motoneurons in the ventral cord of larvae and adults. Expressed in the vulvae and spermathecal uterine valves. Weakly expressed in the pharynx. Specifically expressed in the nervous system.

The protein localises to the membrane. Its function is as follows. Subunit of the V0 complex of vacuolar(H+)-ATPase (V-ATPase), a multisubunit enzyme composed of a peripheral complex (V1) that hydrolyzes ATP and a membrane integral complex (V0) that translocates protons. V-ATPase is responsible for acidifying and maintaining the pH of intracellular compartments and in some cell types, is targeted to the plasma membrane, where it is responsible for acidifying the extracellular environment. Required for assembly and activity of the vacuolar ATPase. Regulates the size of gut granules during embryonic development. In neurons, required for necrotic cell death by promoting intracellular acidification. Required for cell death induced by hypoxia. Required for acidification of synaptic vesicles and the release of neurotransmitters from adult neurons. This chain is V-type proton ATPase 116 kDa subunit a 1, found in Caenorhabditis elegans.